A 645-amino-acid chain; its full sequence is Putative palmitoyltransferase ZDHHC13 (645 aa).

The interval 1–73 (MDWSEGDGSH…KSSHPEDSSS (73 aa)) is disordered. The Cytoplasmic segment spans residues 1–314 (MDWSEGDGSH…ACLKLLNRYK (314 aa)). Over residues 7 to 20 (DGSHSHGHMGDSCH) the composition is skewed to basic and acidic residues. Basic residues predominate over residues 23-33 (GGGHSHGHGHS). The segment covering 34 to 43 (HGGSGFGGFM) has biased composition (gly residues). 5 ANK repeats span residues 104-133 (ENVTLLHWAAINNRADIVKYYISKGAVIDQ), 138-167 (LNSTPLHWAIRQGHLSMVIQLMRYGADPSL), 171-200 (EGYRGLHLAVLFQNMPIAAYLMAKGQEVDL), 204-234 (NGQTPLMLAAQKIIGPEPTNFLIKCNASVNA), and 239-268 (NRNSPLHCAVLAGNVDSVHILLEAGASVDM). Residues 315 to 335 (VCLQSVFSVVVVGAFGAILDM) form a helical membrane-spanning segment. Residue R336 is a topological domain, lumenal. Residues 337-357 (TESWLLKGILLACIMAVINLA) form a helical membrane-spanning segment. Residues 358–369 (SRQLATVAVRSL) lie on the Cytoplasmic side of the membrane. Residues 370–390 (IPSTGLIASVFWMVVTWVLWF) form a helical membrane-spanning segment. Topologically, residues 391–394 (LPDE) are lumenal. A helical transmembrane segment spans residues 395 to 415 (PSAAVQMLFTVNITAVLYYYI). Residues 416–492 (RSCRTDPGHV…NGCIGARNHP (77 aa)) lie on the Cytoplasmic side of the membrane. Residues 449 to 499 (IFCTSCMMRKPMRANHCFSCNACVAKQDHHSIWINGCIGARNHPFFVLFLV) enclose the DHHC domain. Residues 493 to 513 (FFVLFLVALNFLCIWMFYGSI) traverse the membrane as a helical segment. The Lumenal segment spans residues 514-542 (TYWSRHCPLHYSEEGIWGALTALMGCSPW). A helical membrane pass occupies residues 543–563 (LLYVFCFVFFHTTWASILLVL). Topologically, residues 564-645 (QLYQIAFLGL…RDMFSSPDAV (82 aa)) are cytoplasmic.

This sequence belongs to the DHHC palmitoyltransferase family. AKR/ZDHHC17 subfamily.

Its subcellular location is the golgi apparatus membrane. It localises to the cytoplasmic vesicle membrane. Putative palmitoyltransferase that could catalyze the addition of palmitate onto various protein substrates. This is Putative palmitoyltransferase ZDHHC13 from Danio rerio (Zebrafish).